A 189-amino-acid chain; its full sequence is PTS system glucose-specific EIIA component (189 aa).

In terms of domain architecture, PTS EIIA type-1 spans 31–135 (DEAFAEKIVG…SVITPVVIAN (105 aa)). Residues His68 and His83 each contribute to the Zn(2+) site. His83 acts as the Tele-phosphohistidine intermediate; for EIIA activity in catalysis. His83 bears the Phosphohistidine; by HPr mark.

As to quaternary structure, heterodimer with glycerol kinase (glpk). The cofactor is Zn(2+).

It localises to the cytoplasm. Its function is as follows. The phosphoenolpyruvate-dependent sugar phosphotransferase system (sugar PTS), a major carbohydrate active transport system, catalyzes the phosphorylation of incoming sugar substrates concomitantly with their translocation across the cell membrane. The enzyme II complex composed of PtsG and Crr is involved in glucose transport. This is PTS system glucose-specific EIIA component (crr) from Borreliella burgdorferi (strain ATCC 35210 / DSM 4680 / CIP 102532 / B31) (Borrelia burgdorferi).